Consider the following 310-residue polypeptide: Glutaminase (310 aa).

Residues Ser-67, Asn-118, Glu-161, Asn-168, Tyr-192, Tyr-244, and Val-262 each coordinate substrate.

It belongs to the glutaminase family. As to quaternary structure, homotetramer.

The catalysed reaction is L-glutamine + H2O = L-glutamate + NH4(+). The polypeptide is Glutaminase (Legionella pneumophila (strain Lens)).